The primary structure comprises 530 residues: S-adenosylhomocysteine hydrolase-like protein 1 (530 aa).

M1 is subject to N-acetylmethionine. S2 is subject to N-acetylserine. Phosphoserine is present on S2. K40 is modified (N6-acetyllysine). Residues 53–103 (KFPTKTGRRSLSRSISQSSTDSYSSAASYTDSSDDEVSPREKQQTNSKGSS) are disordered. Positions 64–83 (SRSISQSSTDSYSSAASYTD) are enriched in low complexity. A PEST region spans residues 65–92 (RSISQSSTDSYSSAASYTDSSDDEVSPR). 5 positions are modified to phosphoserine: S68, S71, S74, S77, and S84. The interaction with BCL2L10 stretch occupies residues 138–201 (QGEKPLAGAK…EAGVAVFAWK (64 aa)). Residues T155, D229, E254, K284, and D288 each contribute to the substrate site. Positions 281-448 (SVTKQKFDNL…EGRLLNLSCS (168 aa)) are NAD binding. NAD(+)-binding positions include 318 to 322 (GYGEV), E341, and N376. A Phosphoserine modification is found at S391. 397–399 (MGH) is a binding site for NAD(+). The tract at residues 520-530 (NGPFKPNYYRY) is PDZ-binding.

The protein belongs to the adenosylhomocysteinase family. In terms of assembly, forms multimers. Forms heteromultimers with AHCYL2 (via the C-terminal region). Interacts (when phosphorylated) with ITPR1 (when not phosphorylated); the interaction suppresses inositol 1,4,5-trisphosphate binding to ITPR1. Interacts with BCL2L10; this strengthens the interaction of AHCYL1 with ITPR1. Interacts with CFTR and SLC26A6; the interactions take place once AHCYL1 is released from ITPR1 and increase CFTR and SLC26A6 activities. Interacts with RRM1; in a phosphorylation- and (dATP)-dependent manner. Interacts (via PEST domain when phosphorylated) with SLC4A4 isoform 1 but not isoform 2; the interaction increases SLC4A4 isoform 1 activity. Interacts (when phosphorylated) with SLC9A3; the interaction is required for SLC9A3 apical location and activity. Interacts (when phosphorylated) with FIP1L1; the interaction is direct and associates AHCYL1 with the CPSF complex and RNA. Interacts with PAPOLA. Interacts with ZCCHC4. Interacts with AHCY. Requires NAD(+) as cofactor. In terms of processing, phosphorylated at Ser/Thr residues between Ser-68 and Thr-72 in the PEST region: required for interaction with dATP-bound RRM1 and ITPR1. Phosphorylation at Ser-68 by PRKD1 and CAMK4 is required for further phosphorylations by CSNK1A1. Phosphorylation is induced by oxidative stress. Probably phosphorylated by CAMK2A; phosphorylation at Ser-68 may be required for interaction with SLC9A3. Dephosphorylated in response to apoptotic stress conditions which causes translocation of both AHCYL1 and BCL2L10 from mitochondria-associated endoplasmic reticulum membranes and promotes apoptosis. As to expression, expressed in dendritic cells.

The protein resides in the endoplasmic reticulum. It localises to the cytoplasm. Its subcellular location is the cytosol. It is found in the apical cell membrane. The protein localises to the microsome. Functionally, multifaceted cellular regulator which coordinates several essential cellular functions including regulation of epithelial HCO3(-) and fluid secretion, mRNA processing and DNA replication. Regulates ITPR1 sensitivity to inositol 1,4,5-trisphosphate, competing for the common binding site and acting as endogenous 'pseudoligand' whose inhibitory activity can be modulated by its phosphorylation status. Promotes the formation of contact points between the endoplasmic reticulum (ER) and mitochondria, facilitating transfer of Ca(2+) from the ER to mitochondria. Under normal cellular conditions, functions cooperatively with BCL2L10 to limit ITPR1-mediated Ca(2+) release but, under apoptotic stress conditions, dephosphorylated which promotes dissociation of both AHCYL1 and BCL2L10 from mitochondria-associated endoplasmic reticulum membranes, inhibits BCL2L10 interaction with ITPR1 and leads to increased Ca(2+) transfer to mitochondria which promotes apoptosis. In the pancreatic and salivary ducts, at resting state, attenuates inositol 1,4,5-trisphosphate-induced calcium release by interacting with ITPR1. When extracellular stimuli induce ITPR1 phosphorylation or inositol 1,4,5-trisphosphate production, dissociates from ITPR1 to interact with CFTR and SLC26A6, mediating their synergistic activation by calcium and cAMP that stimulates the epithelial secretion of electrolytes and fluid. Also activates basolateral SLC4A4 isoform 1 to coordinate fluid and HCO3(-) secretion. Inhibits the effect of STK39 on SLC4A4 and CFTR by recruiting PP1 phosphatase which activates SLC4A4, SLC26A6 and CFTR through dephosphorylation. Mediates the induction of SLC9A3 surface expression produced by Angiotensin-2. Depending on the cell type, activates SLC9A3 in response to calcium or reverses SLC9A3R2-dependent calcium inhibition. May modulate the polyadenylation state of specific mRNAs, both by controlling the subcellular location of FIP1L1 and by inhibiting PAPOLA activity, in response to a stimulus that alters its phosphorylation state. Acts as a (dATP)-dependent inhibitor of ribonucleotide reductase large subunit RRM1, controlling the endogenous dNTP pool and ensuring normal cell cycle progression. In vitro does not exhibit any S-adenosyl-L-homocysteine hydrolase activity. This Homo sapiens (Human) protein is S-adenosylhomocysteine hydrolase-like protein 1.